A 231-amino-acid chain; its full sequence is Flagellar L-ring protein (231 aa).

Residues 1-18 (MSRLLIVVSLSSAFALAG) form the signal peptide. Cys19 carries the N-palmitoyl cysteine lipid modification. Cys19 carries the S-diacylglycerol cysteine lipid modification.

The protein belongs to the FlgH family. As to quaternary structure, the basal body constitutes a major portion of the flagellar organelle and consists of four rings (L,P,S, and M) mounted on a central rod.

Its subcellular location is the cell outer membrane. The protein resides in the bacterial flagellum basal body. Functionally, assembles around the rod to form the L-ring and probably protects the motor/basal body from shearing forces during rotation. The protein is Flagellar L-ring protein of Stutzerimonas stutzeri (strain A1501) (Pseudomonas stutzeri).